Here is a 461-residue protein sequence, read N- to C-terminus: MSHIRSRFSKPADELVVRYTTSLPFDWRLYKEDIKCSTAHARMLSKQGIISTEDSQSIINGLNAILTEIETGSFVFKPEMEDIHMAIEGRLFELIGEAAGRLHTARSRNDQVATDVHLFVKNACDKTINKIRTLQGTLLEQAEAHPQTALPGYTHMQIAQPVLLPHHLLAYFEMLERDCGRFTDARKRADVMPLGSGALAGVPYPLDREMVAKELGFSAISQNSLDAVSERDFILEYLSDAAICQMHLSRLSEEMVIWSSAEYAFVELDDAYTTGSSIMPQKKNPDVAELCRGKTGRVYGSLNTMLTVMKGLPLSYNRDLQEDKEPLFDCVDTLGDSLEVFAGMIKTAKFKPERMLRALEKGYVLATDIADYLVGKGESFRNSHGIVARLVSYAVAQNKTFGELSLAEYRQFSNLFEKDIYAVDIKSALNARNLPGGTAPKQIAQAIARAKKILAEAGVKN.

The protein belongs to the lyase 1 family. Argininosuccinate lyase subfamily.

The protein localises to the cytoplasm. The catalysed reaction is 2-(N(omega)-L-arginino)succinate = fumarate + L-arginine. It functions in the pathway amino-acid biosynthesis; L-arginine biosynthesis; L-arginine from L-ornithine and carbamoyl phosphate: step 3/3. The sequence is that of Argininosuccinate lyase from Dehalococcoides mccartyi (strain ATCC BAA-2100 / JCM 16839 / KCTC 5957 / BAV1).